The primary structure comprises 313 residues: Alpha-S1-casein (313 aa).

The first 15 residues, 1 to 15 (MKLLILTCLVAAAFA), serve as a signal peptide directing secretion. The span at 77-96 (ASEEQAMASAQEDSSISSSS) shows a compositional bias: low complexity. A disordered region spans residues 77-111 (ASEEQAMASAQEDSSISSSSEESEEAIPNITEQKN). Phosphoserine is present on residues S90, S91, S93, S94, S95, and S96. 15 consecutive repeat copies span residues 135-140 (LLQKAS), 141-146 (LAKQAS), 147-152 (LFQQPS), 153-158 (LVQQAS), 159-164 (LFQQPS), 165-170 (LLQQAS), 171-176 (LFQQPS), 177-182 (MAQQAS), 183-188 (LLQQLL), 189-194 (LAQQPS), 195-200 (LALQVS), 201-206 (PAQQSS), 207-212 (LVQQAF), 213-218 (LAQQAS), and 219-224 (LAQKHH). Positions 135–224 (LLQKASLAKQ…QQASLAQKHH (90 aa)) are 15 X 6 AA tandem repeats.

The protein belongs to the alpha-casein family. In terms of tissue distribution, mammary gland specific. Secreted in milk.

It localises to the secreted. In terms of biological role, important role in the capacity of milk to transport calcium phosphate. In Mus musculus (Mouse), this protein is Alpha-S1-casein (Csn1s1).